The sequence spans 637 residues: Serine/threonine protein kinase ypkA (637 aa).

Over residues 20 to 29 (TFTRSSSTST) the composition is skewed to low complexity. Disordered stretches follow at residues 20–63 (TFTR…SLVS) and 104–140 (SSSV…INAA). Positions 40–61 (VVSQTPSISSTNSNGINASESL) are enriched in polar residues. Low complexity predominate over residues 104-116 (SSSVRPSSSSSHS). Positions 117-136 (THGQTASFAQSGRPQSTSGG) are enriched in polar residues. Residues 294 to 551 (FDLLKVVGKG…AAEIKSHHFF (258 aa)) form the Protein kinase domain. Residues 300-308 (VGKGSFGKV) and Lys323 contribute to the ATP site. The active-site Proton acceptor is Asp417. In terms of domain architecture, AGC-kinase C-terminal spans 552–623 (ANIDWRKLLQ…NRPVAGLGDA (72 aa)). A phosphoserine mark is found at Ser593 and Ser612. Tyr613 carries the post-translational modification Phosphotyrosine.

Belongs to the protein kinase superfamily. Ser/Thr protein kinase family. As to quaternary structure, interacts with the sakA MAP kinase.

The enzyme catalyses L-seryl-[protein] + ATP = O-phospho-L-seryl-[protein] + ADP + H(+). It carries out the reaction L-threonyl-[protein] + ATP = O-phospho-L-threonyl-[protein] + ADP + H(+). In terms of biological role, serine/threonine protein kinase required for vegetative growth and conidiation. Important for fungal survival through the regulation of glycosphingolipid (GSL) biosynthesis and cross talks with MAP kinase pathways such as the cell wall integrity (CWI) and the high osmolarity glycerol (HOG) pathways. The sequence is that of Serine/threonine protein kinase ypkA from Aspergillus fumigatus (strain ATCC MYA-4609 / CBS 101355 / FGSC A1100 / Af293) (Neosartorya fumigata).